The primary structure comprises 105 residues: Nucleoid-associated protein Dred_0043 (105 aa).

This sequence belongs to the YbaB/EbfC family. Homodimer.

It is found in the cytoplasm. It localises to the nucleoid. Functionally, binds to DNA and alters its conformation. May be involved in regulation of gene expression, nucleoid organization and DNA protection. The sequence is that of Nucleoid-associated protein Dred_0043 from Desulforamulus reducens (strain ATCC BAA-1160 / DSM 100696 / MI-1) (Desulfotomaculum reducens).